A 32-amino-acid polypeptide reads, in one-letter code: Calcitonin (32 aa).

C1 and C7 are oxidised to a cystine. Position 32 is a proline amide (P32).

Belongs to the calcitonin family.

The protein resides in the secreted. Causes a rapid but short-lived drop in the level of calcium and phosphate in blood by promoting the incorporation of those ions in the bones. The sequence is that of Calcitonin from Aquarana catesbeiana (American bullfrog).